A 247-amino-acid polypeptide reads, in one-letter code: Geranylgeranylglyceryl phosphate synthase (247 aa).

Residues D23 and S52 each contribute to the Mg(2+) site. Sn-glycerol 1-phosphate-binding positions include 171–177, 203–204, and 225–226; these read YLEAGSG, GG, and GT.

This sequence belongs to the GGGP/HepGP synthase family. Group II subfamily. The cofactor is Mg(2+).

It localises to the cytoplasm. The catalysed reaction is sn-glycerol 1-phosphate + (2E,6E,10E)-geranylgeranyl diphosphate = sn-3-O-(geranylgeranyl)glycerol 1-phosphate + diphosphate. It functions in the pathway membrane lipid metabolism; glycerophospholipid metabolism. Its function is as follows. Prenyltransferase that catalyzes the transfer of the geranylgeranyl moiety of geranylgeranyl diphosphate (GGPP) to the C3 hydroxyl of sn-glycerol-1-phosphate (G1P). This reaction is the first ether-bond-formation step in the biosynthesis of archaeal membrane lipids. The chain is Geranylgeranylglyceryl phosphate synthase from Methanosarcina mazei (strain ATCC BAA-159 / DSM 3647 / Goe1 / Go1 / JCM 11833 / OCM 88) (Methanosarcina frisia).